The following is a 377-amino-acid chain: Transcription factor SOX-18 (377 aa).

The disordered stretch occupies residues 1 to 76 (MQRSPPGYGA…GRGERQTADE (76 aa)). 2 stretches are compositionally biased toward low complexity: residues 21–34 (AWAP…EARG) and 41–52 (SPTSPASPSSLP). Positions 79–147 (IRRPMNAFMV…QHLRDHPNYK (69 aa)) form a DNA-binding region, HMG box. Interaction with DNA regions lie at residues 81–94 (RPMN…KDER) and 105–117 (HNAV…GKAW). Residues 160–225 (RRLEPGLLLP…GLEPGEASFF (66 aa)) are important for transcriptional activation. The Sox C-terminal domain occupies 256-376 (GAPLAEALRT…SAVYYSACIS (121 aa)). The 9aaTAD signature appears at 318–326 (TEFDQYLNC).

In terms of assembly, interacts (via C-terminus) with MEF2C (via MADS box). In terms of tissue distribution, detected in adult lung, heart and skeletal muscles.

It is found in the nucleus. Its function is as follows. Transcriptional activator that binds to the consensus sequence 5'-AACAAAG-3' in the promoter of target genes and plays an essential role in embryonic cardiovascular development and lymphangiogenesis. Activates transcription of PROX1 and other genes coding for lymphatic endothelial markers. Plays an essential role in triggering the differentiation of lymph vessels, but is not required for the maintenance of differentiated lymphatic endothelial cells. Plays an important role in postnatal angiogenesis, where it is functionally redundant with SOX17. Interaction with MEF2C enhances transcriptional activation. Besides, required for normal hair development. The polypeptide is Transcription factor SOX-18 (Sox18) (Mus musculus (Mouse)).